Reading from the N-terminus, the 186-residue chain is Der GTPase-activating protein YihI (186 aa).

Residues Lys-42 to Asp-77 form a disordered region. Residues Ser-62–Asp-77 show a composition bias toward basic and acidic residues.

The protein belongs to the YihI family. As to quaternary structure, interacts with Der.

Functionally, a GTPase-activating protein (GAP) that modifies Der/EngA GTPase function. May play a role in ribosome biogenesis. This Haemophilus influenzae (strain ATCC 51907 / DSM 11121 / KW20 / Rd) protein is Der GTPase-activating protein YihI.